The chain runs to 262 residues: Ninja-family protein 2 (262 aa).

Residues 49–70 (RNSLACNTSKEAAGQSPKEMNA) form a disordered region.

Belongs to the Ninja family.

Its subcellular location is the nucleus. In Zea mays (Maize), this protein is Ninja-family protein 2.